The primary structure comprises 141 residues: Glutathione transferase FosA (141 aa).

The 114-residue stretch at 4–117 (SLNHLTLAVS…DGHKLELHVG (114 aa)) folds into the VOC domain. The Mn(2+) site is built by His-7, His-67, and Glu-113.

It belongs to the fosfomycin resistance protein family. Homodimer. Mn(2+) serves as cofactor.

It is found in the cytoplasm. The enzyme catalyses RX + glutathione = an S-substituted glutathione + a halide anion + H(+). Requires the monovalent cation K(+) for optimal activity. Its function is as follows. Metalloglutathione transferase which confers resistance to fosfomycin by catalyzing the addition of glutathione to fosfomycin. This chain is Glutathione transferase FosA (fosA), found in Serratia marcescens.